Consider the following 2631-residue polypeptide: Cyclic GMP-binding protein C (2631 aa).

LRR repeat units follow at residues 170–194, 196–217, 218–240, 242–262, 263–285, and 287–308; these read TAQI…IFSL, WIQK…IGKL, QQLQ…IGDL, NLKR…LERL, SKLE…IASL, and SLKT…VVSK. Residues 323 to 515 form the Roc domain; the sequence is GARPCLRSKL…QLIEDIIKTQ (193 aa). Residues 336–343, 402–406, and 458–461 contribute to the GTP site; these read GDPGVGKT, DIANQ, and THID. The COR domain occupies 523 to 741; it reads PSSFFTLEEA…ESCQKRAVIL (219 aa). Residues 878–1172 enclose the Protein kinase domain; that stretch reads VKINKEVGRG…KKKFAPLPFT (295 aa). ATP contacts are provided by residues 884–892 and Lys905; that span reads VGRGAFGIV. Asp1023 functions as the Proton acceptor in the catalytic mechanism. A compositionally biased stretch (polar residues) spans 1225–1250; that stretch reads ISLTSSGTSPTNSPVGGLLSQSLTQP. Disordered stretches follow at residues 1225–1263 and 1387–1418; these read ISLT…ILST and SSAT…RNSV. The segment covering 1251–1263 has biased composition (low complexity); the sequence is ITSGGSTSGILST. The N-terminal Ras-GEF domain occupies 1366 to 1539; that stretch reads SVSIIIAATM…QIYGTLTTHE (174 aa). Residues 1392–1404 show a composition bias toward basic and acidic residues; that stretch reads KSEHISTRRRSDT. In terms of domain architecture, DEP spans 1620 to 1706; the sequence is PLLGITVKEK…SPTSFYMFLE (87 aa). One can recognise a Ras-GEF domain in the interval 1708 to 1971; the sequence is DPELIARQYT…DLKALDSLQI (264 aa). Positions 1989 to 2013 are disordered; that stretch reads GTTNDDKEKGDENGGGLTSSNFFGN. 2014–2133 contributes to the a nucleoside 3',5'-cyclic phosphate binding site; sequence GSDELTERDW…AKFYKIMANQ (120 aa). Disordered stretches follow at residues 2142–2180, 2192–2239, and 2263–2346; these read PWSK…GGGL, MSLS…TTTD, and SANL…GQQP. The span at 2144 to 2174 shows a compositional bias: low complexity; that stretch reads SKPKNTTGGSSSSNQSAGPDNILGTTPTGIS. Residues 2212–2221 show a composition bias toward pro residues; it reads LPSPPAPLQS. Residues 2222-2238 are compositionally biased toward low complexity; sequence PPTSGISSPTTTTSTTT. A compositionally biased stretch (basic and acidic residues) spans 2287-2299; it reads TINKDPHQRDSGS. Positions 2321 to 2336 are enriched in polar residues; the sequence is GSISYLGRTQTSTSPL. One can recognise a GRAM domain in the interval 2354-2414; that stretch reads EFCQRFALVD…KNIDKLICIN (61 aa). 2490–2616 is a binding site for a nucleoside 3',5'-cyclic phosphate; it reads GDELTKEDWE…ASKWFKYLAT (127 aa).

Belongs to the protein kinase superfamily. TKL Ser/Thr protein kinase family. ROCO subfamily.

The catalysed reaction is L-seryl-[protein] + ATP = O-phospho-L-seryl-[protein] + ADP + H(+). The enzyme catalyses L-threonyl-[protein] + ATP = O-phospho-L-threonyl-[protein] + ADP + H(+). Promotes the exchange of Ras-bound GDP by GTP. Required for cyclic GMP-mediated chemotaxis, polarity. Plays a key role in cyclic AMP-induced myosin II translocation to the cortex. Also involved in the phosphorylation of mlkA and mlcR, either directly or via an intermediate kinase. In Dictyostelium discoideum (Social amoeba), this protein is Cyclic GMP-binding protein C (gbpC).